The chain runs to 326 residues: Acetyl-coenzyme A carboxylase carboxyl transferase subunit alpha (326 aa).

The 255-residue stretch at 46 to 300 folds into the CoA carboxyltransferase C-terminal domain; sequence EIEARAAELR…KEALLRHLDE (255 aa).

The protein belongs to the AccA family. As to quaternary structure, acetyl-CoA carboxylase is a heterohexamer composed of biotin carboxyl carrier protein (AccB), biotin carboxylase (AccC) and two subunits each of ACCase subunit alpha (AccA) and ACCase subunit beta (AccD).

Its subcellular location is the cytoplasm. It catalyses the reaction N(6)-carboxybiotinyl-L-lysyl-[protein] + acetyl-CoA = N(6)-biotinyl-L-lysyl-[protein] + malonyl-CoA. The protein operates within lipid metabolism; malonyl-CoA biosynthesis; malonyl-CoA from acetyl-CoA: step 1/1. Its function is as follows. Component of the acetyl coenzyme A carboxylase (ACC) complex. First, biotin carboxylase catalyzes the carboxylation of biotin on its carrier protein (BCCP) and then the CO(2) group is transferred by the carboxyltransferase to acetyl-CoA to form malonyl-CoA. This chain is Acetyl-coenzyme A carboxylase carboxyl transferase subunit alpha, found in Gloeobacter violaceus (strain ATCC 29082 / PCC 7421).